Here is a 116-residue protein sequence, read N- to C-terminus: Iron-sulfur cluster insertion protein ErpA (116 aa).

3 residues coordinate iron-sulfur cluster: Cys44, Cys108, and Cys110.

This sequence belongs to the HesB/IscA family. As to quaternary structure, homodimer. Iron-sulfur cluster serves as cofactor.

Its function is as follows. Required for insertion of 4Fe-4S clusters for at least IspG. The protein is Iron-sulfur cluster insertion protein ErpA of Nitrosococcus oceani (strain ATCC 19707 / BCRC 17464 / JCM 30415 / NCIMB 11848 / C-107).